A 374-amino-acid polypeptide reads, in one-letter code: uncharacterized protein (374 aa).

Residues aspartate 158, histidine 160, aspartate 190, asparagine 221, histidine 312, and histidine 314 each coordinate a divalent metal cation.

It belongs to the metallophosphoesterase superfamily. It depends on a divalent metal cation as a cofactor.

This is an uncharacterized protein from Campylobacter jejuni subsp. jejuni serotype O:2 (strain ATCC 700819 / NCTC 11168).